Here is a 165-residue protein sequence, read N- to C-terminus: Urease accessory protein UreE (165 aa).

The protein belongs to the UreE family.

The protein resides in the cytoplasm. Functionally, involved in urease metallocenter assembly. Binds nickel. Probably functions as a nickel donor during metallocenter assembly. This is Urease accessory protein UreE from Flavobacterium johnsoniae (strain ATCC 17061 / DSM 2064 / JCM 8514 / BCRC 14874 / CCUG 350202 / NBRC 14942 / NCIMB 11054 / UW101) (Cytophaga johnsonae).